Consider the following 620-residue polypeptide: Glutathione-regulated potassium-efflux system protein KefC (620 aa).

Over 1–3 (MDS) the chain is Periplasmic. A helical membrane pass occupies residues 4–24 (HTLVQALIYLGSAALIVPIAV). Position 25 (R25) is a topological domain, cytoplasmic. A helical transmembrane segment spans residues 26–46 (LGLGSVLGYLIAGCIIGPWGL). The Periplasmic segment spans residues 47-53 (RLVTDAE). Residues 54-74 (SILHFAEIGVVLMLFIIGLEL) traverse the membrane as a helical segment. The Cytoplasmic segment spans residues 75–89 (DPQRLWKLRAAVFGG). The helical transmembrane segment at 90–110 (GALQMVICGGLLGLFCMLLGL) threads the bilayer. Residues 111-113 (RWQ) are Periplasmic-facing. A helical membrane pass occupies residues 114 to 134 (VAELIGMTLALSSTAIAMQAM). The Cytoplasmic segment spans residues 135–148 (NERNLMVTQMGRSA). A helical membrane pass occupies residues 149–169 (FAVLLFQDIAAIPLVAMIPLL). Over 170–177 (AASSASTT) the chain is Periplasmic. The chain crosses the membrane as a helical span at residues 178–198 (MGAFALSALKVAGALVLVVLL). Residues 199 to 213 (GRYVTRPALRFVARS) are Cytoplasmic-facing. A helical membrane pass occupies residues 214-233 (GLREVFSAVALFLVFGFGLL). At 234–236 (LEE) the chain is on the periplasmic side. Residues 237 to 254 (VGLSMAMGAFLAGVLLAS) traverse the membrane as a helical segment. Topologically, residues 255–269 (SEYRHALESDIEPFK) are cytoplasmic. Residues 270 to 290 (GLLLGLFFIGVGMSIDFGTLI) form a helical membrane-spanning segment. Topologically, residues 291–293 (ENP) are periplasmic. A helical transmembrane segment spans residues 294-314 (LRIVILLLGFLIIKIAMLWLI). Over 315–326 (ARPLQVPNKQRR) the chain is Cytoplasmic. Residues 327-347 (WFAVLLGQGSEFAFVVFGAAQ) traverse the membrane as a helical segment. The Periplasmic portion of the chain corresponds to 348 to 358 (MANVLEPEWAK). A helical transmembrane segment spans residues 359-379 (SLTLAVALSMAATPILLVILN). Residues 380 to 620 (RLEQSSTEEA…ADEPETKPSS (241 aa)) are Cytoplasmic-facing. The region spanning 399 to 518 (QPRVIIAGFG…AGVEKPERET (120 aa)) is the RCK N-terminal domain. The interval 597 to 620 (GWQGTEEGKHTGNMADEPETKPSS) is disordered.

It belongs to the monovalent cation:proton antiporter 2 (CPA2) transporter (TC 2.A.37) family. KefC subfamily. Homodimer. Interacts with the regulatory subunit KefF.

Its subcellular location is the cell inner membrane. Its function is as follows. Pore-forming subunit of a potassium efflux system that confers protection against electrophiles. Catalyzes K(+)/H(+) antiport. This is Glutathione-regulated potassium-efflux system protein KefC from Shigella flexneri.